Reading from the N-terminus, the 270-residue chain is Formamidopyrimidine-DNA glycosylase (270 aa).

Pro-2 (schiff-base intermediate with DNA) is an active-site residue. The Proton donor role is filled by Glu-3. The Proton donor; for beta-elimination activity role is filled by Lys-58. Residues His-91, Arg-110, and Lys-151 each coordinate DNA. The segment at 236–270 adopts an FPG-type zinc-finger fold; sequence FVYGRGGQPCKVCGTTLREIKLGQRASVYCPKCQR. Arg-260 functions as the Proton donor; for delta-elimination activity in the catalytic mechanism.

This sequence belongs to the FPG family. As to quaternary structure, monomer. The cofactor is Zn(2+).

The enzyme catalyses Hydrolysis of DNA containing ring-opened 7-methylguanine residues, releasing 2,6-diamino-4-hydroxy-5-(N-methyl)formamidopyrimidine.. The catalysed reaction is 2'-deoxyribonucleotide-(2'-deoxyribose 5'-phosphate)-2'-deoxyribonucleotide-DNA = a 3'-end 2'-deoxyribonucleotide-(2,3-dehydro-2,3-deoxyribose 5'-phosphate)-DNA + a 5'-end 5'-phospho-2'-deoxyribonucleoside-DNA + H(+). In terms of biological role, involved in base excision repair of DNA damaged by oxidation or by mutagenic agents. Acts as a DNA glycosylase that recognizes and removes damaged bases. Has a preference for oxidized purines, such as 7,8-dihydro-8-oxoguanine (8-oxoG). Has AP (apurinic/apyrimidinic) lyase activity and introduces nicks in the DNA strand. Cleaves the DNA backbone by beta-delta elimination to generate a single-strand break at the site of the removed base with both 3'- and 5'-phosphates. The protein is Formamidopyrimidine-DNA glycosylase of Pseudomonas savastanoi pv. phaseolicola (strain 1448A / Race 6) (Pseudomonas syringae pv. phaseolicola (strain 1448A / Race 6)).